Reading from the N-terminus, the 156-residue chain is Zinc finger SWIM domain-containing protein 7 homolog (156 aa).

The segment at 82–120 adopts an SWIM-type zinc-finger fold; the sequence is YMCLIQGDYCSCPSFNFSVLLKSDSVYCKHQISSILAEI.

It belongs to the SWS1 family.

The protein localises to the nucleus. May be involved in the homologous recombination repair (HRR) pathway of double-stranded DNA breaks arising during DNA replication or induced by DNA-damaging agents. This chain is Zinc finger SWIM domain-containing protein 7 homolog (zswim7), found in Dictyostelium discoideum (Social amoeba).